The sequence spans 333 residues: Na(+)/H(+) exchange regulatory cofactor NHE-RF1 (333 aa).

In terms of domain architecture, PDZ 1 spans 13 to 93 (LCCMEKGPDG…AVRLLVVQPQ (81 aa)). Disordered regions lie at residues 90–164 (VQPQ…RAVD) and 232–333 (LAGP…FSNL). Over residues 97 to 111 (QPPKTHSDPDGEAQR) the composition is skewed to basic and acidic residues. Positions 112 to 122 (EPPAAETPAAE) are enriched in low complexity. Residues 124–133 (SGPEERELRP) are compositionally biased toward basic and acidic residues. Residues 135 to 215 (LCRIKKGPNG…ETKLLVVGVL (81 aa)) form the PDZ 2 domain. Composition is skewed to basic and acidic residues over residues 274–289 (SETHSEPDTQEGDKRS) and 323–333 (WSKKNELFSNL).

The protein localises to the endomembrane system. The protein resides in the cell projection. It is found in the filopodium. Its subcellular location is the ruffle. It localises to the microvillus. In terms of biological role, scaffold protein that connects plasma membrane proteins with members of the ezrin/moesin/radixin family and thereby helps to link them to the actin cytoskeleton and to regulate their surface expression. Was first known to play a role in the regulation of the activity and subcellular location of SLC9A3. May enhance Wnt signaling. In Gallus gallus (Chicken), this protein is Na(+)/H(+) exchange regulatory cofactor NHE-RF1 (NHERF1).